A 1357-amino-acid chain; its full sequence is MEFYESAYFIVLIPSIVITVIFLFFWLFMKETLYDEVLAKQKREQKLIPTKTDKKKAEKKKNKKKEIQNGNLHESDSESVPRDFKLSDALAVEDDQVAPVPLNVVETSSSVRERKKKEKKQKPVLEEQVIKESDASKIPGKKVEPVPVTKQPTPPSEAAASKKKPGQKKSKNGSDDQDKKVETLMVPSKRQEALPLHQETKQESGSGKKKASSKKQKTENVFVDEPLIHATTYIPLMDNADSSPVVDKREVIDLLKPDQVEGIQKSGTKKLKTETDKENAEVKFKDFLLSLKTMMFSEDEALCVVDLLKEKSGVIQDALKKSSKGELTTLIHQLQEKDKLLAAVKEDAAATKDRCKQLTQEMMTEKERSNVVITRMKDRIGTLEKEHNVFQNKIHVSYQETQQMQMKFQQVREQMEAEIAHLKQENGILRDAVSNTTNQLESKQSAELNKLRQDYARLVNELTEKTGKLQQEEVQKKNAEQAATQLKVQLQEAERRWEEVQSYIRKRTAEHEAAQQDLQSKFVAKENEVQSLHSKLTDTLVSKQQLEQRLMQLMESEQKRVNKEESLQMQVQDILEQNEALKAQIQQFHSQIAAQTSASVLAEELHKVIAEKDKQIKQTEDSLASERDRLTSKEEELKDIQNMNFLLKAEVQKLQALANEQAAAAHELEKMQQSVYVKDDKIRLLEEQLQHEISNKMEEFKILNDQNKALKSEVQKLQTLVSEQPNKDVVEQMEKCIQEKDEKLKTVEELLETGLIQVATKEEELNAIRTENSSLTKEVQDLKAKQNDQVSFASLVEELKKVIHEKDGKIKSVEELLEAELLKVANKEKTVQDLKQEIKALKEEIGNVQLEKAQQLSITSKVQELQNLLKGKEEQMNTMKAVLEEKEKDLANTGKWLQDLQEENESLKAHVQEVAQHNLKEASSASQFEELEIVLKEKENELKRLEAMLKERESDLSSKTQLLQDVQDENKLFKSQIEQLKQQNYQQASSFPPHEELLKVISEREKEISGLWNELDSLKDAVEHQRKKNNDLREKNWEAMEALASTEKMLQDKVNKTSKERQQQVEAVELEAKEVLKKLFPKVSVPSNLSYGEWLHGFEKKAKECMAGTSGSEEVKVLEHKLKEADEMHTLLQLECEKYKSVLAETEGILQKLQRSVEQEENKWKVKVDESHKTIKQMQSSFTSSEQELERLRSENKDIENLRREREHLEMELEKAEMERSTYVTEVRELKDLLTELQKKLDDSYSEAVRQNEELNLLKAQLNETLTKLRTEQNERQKVAGDLHKAQQSLELIQSKIVKAAGDTTVIENSDVSPETESSEKETMSVSLNQTVTQLQQLLQAVNQQLTKEKEHYQVLE.

Over 1–6 (MEFYES) the chain is Cytoplasmic. Residues 7–29 (AYFIVLIPSIVITVIFLFFWLFM) traverse the membrane as a helical; Signal-anchor for type II membrane protein segment. Residues 30-1357 (KETLYDEVLA…KEKEHYQVLE (1328 aa)) lie on the Lumenal side of the membrane. Disordered stretches follow at residues 48-81 (IPTK…ESVP) and 103-218 (NVVE…KQKT). A Phosphoserine; by FAM20C modification is found at Ser75. Position 77 is a phosphoserine (Ser77). Residues 121 to 135 (QKPVLEEQVIKESDA) show a composition bias toward basic and acidic residues. Phosphothreonine is present on Thr153. A Phosphoserine modification is found at Ser156. Basic residues predominate over residues 161 to 171 (SKKKPGQKKSK). Asn172, Asn435, Asn772, Asn904, and Asn1055 each carry an N-linked (GlcNAc...) asparagine glycan. Positions 172 to 182 (NGSDDQDKKVE) are enriched in basic and acidic residues. Residues 330–1356 (LIHQLQEKDK…TKEKEHYQVL (1027 aa)) adopt a coiled-coil conformation. Ser1084 carries the post-translational modification Phosphoserine. N-linked (GlcNAc...) asparagine glycans are attached at residues Asn1088 and Asn1263. Ser1313 is subject to Phosphoserine. N-linked (GlcNAc...) asparagine glycosylation is present at Asn1329.

Belongs to the kinectin family. In terms of assembly, parallel homodimers formed between the membrane-bound and the cytosolic form, and also between 2 cytosolic forms. High levels in peripheral blood lymphocytes, testis and ovary, lower levels in spleen, thymus, prostate, small intestine and colon.

It localises to the endoplasmic reticulum membrane. In terms of biological role, receptor for kinesin thus involved in kinesin-driven vesicle motility. Accumulates in integrin-based adhesion complexes (IAC) upon integrin aggregation by fibronectin. This chain is Kinectin (KTN1), found in Homo sapiens (Human).